A 131-amino-acid chain; its full sequence is MSKDFSRTQRVSQQLQKELAMILQREVRDSRLGMVTISDVEVSRDLAYAKVFVTFLCVGEQTPESCLAALREHEVHIRMMLGKRIRLRLTPEVRFYYDNTLVEGMRMSNLVTEVVNKDKIKQKDAGREDEE.

This sequence belongs to the RbfA family. Monomer. Binds 30S ribosomal subunits, but not 50S ribosomal subunits or 70S ribosomes.

The protein resides in the cytoplasm. One of several proteins that assist in the late maturation steps of the functional core of the 30S ribosomal subunit. Associates with free 30S ribosomal subunits (but not with 30S subunits that are part of 70S ribosomes or polysomes). Required for efficient processing of 16S rRNA. May interact with the 5'-terminal helix region of 16S rRNA. In Vibrio vulnificus (strain CMCP6), this protein is Ribosome-binding factor A.